Consider the following 100-residue polypeptide: Guanine nucleotide-binding protein subunit gamma 2 (100 aa).

Met-1 is modified (N-acetylmethionine). Residues 19-55 adopt a coiled-coil conformation; sequence TRGKHRIQAELKRLEQEARFLEEELEQLEKMDNASAS. The 80-residue stretch at 21 to 100 folds into the G protein gamma domain; it reads GKHRIQAELK…EAKRCGCSIL (80 aa). The regulates lipidation and cell membrane subcellular localization stretch occupies residues 90–96; that stretch reads KEAKRCG. Residue Cys-95 is the site of S-palmitoyl cysteine attachment. At Cys-97 the chain carries Cysteine methyl ester. Cys-97 carries the S-farnesyl cysteine lipid modification. A propeptide spans 98-100 (removed in mature form); the sequence is SIL.

In terms of assembly, g proteins are composed of 3 units, alpha, beta and gamma. GPG1 interacts with the beta subunit GB1. The dimer GB1-GG2 interacts with NDL1, NDL2 and NDL3. Binds to NUDT7. In terms of tissue distribution, mostly expressed in roots (excluded from the stele), seedlings (especially at the hypocotyl/root junction), floral stems, floral buds, flowers and siliques, and, to a lower extent, in leaves (restricted to guard cells). Also present in hydathods.

It is found in the cell membrane. Guanine nucleotide-binding proteins (G proteins) are involved as a modulator or transducer in various transmembrane signaling systems. The beta and gamma chains are required for the GTPase activity, for replacement of GDP by GTP, and for G protein-effector interaction. Involved in the abscisic acid (ABA) and ethylene signaling pathways. Regulates basipetal transport of auxin (IAA) in roots and hypocotyls, and thus modulates root architecture (e.g. lateral root formation). The heterotrimeric G-protein controls defense responses to necrotrophic and vascular fungi probably by modulating cell wall-related genes expression; involved in resistance to Plectosphaerella cucumerina. This chain is Guanine nucleotide-binding protein subunit gamma 2 (GG2), found in Arabidopsis thaliana (Mouse-ear cress).